The chain runs to 434 residues: Trigger factor (434 aa).

The PPIase FKBP-type domain occupies 162-247 (GDKINISLIA…FNTVEQAKLP (86 aa)).

It belongs to the FKBP-type PPIase family. Tig subfamily.

The protein localises to the cytoplasm. The enzyme catalyses [protein]-peptidylproline (omega=180) = [protein]-peptidylproline (omega=0). In terms of biological role, involved in protein export. Acts as a chaperone by maintaining the newly synthesized protein in an open conformation. Functions as a peptidyl-prolyl cis-trans isomerase. The protein is Trigger factor of Methylobacillus flagellatus (strain ATCC 51484 / DSM 6875 / VKM B-1610 / KT).